The following is a 20-amino-acid chain: ALAGTIIAGASLTFKILDEV.

Residues 1–10 are plays an important role in the hemolytic activity; the sequence is ALAGTIIAGA. The interval 9 to 20 is N-terminal region; that stretch reads GASLTFKILDEV.

It belongs to the actinoporin family. Sea anemone subfamily. As to quaternary structure, octamer or nonamer in membranes. Monomer in the soluble state.

It is found in the secreted. It localises to the nematocyst. Its subcellular location is the target cell membrane. Pore-forming protein that forms cations-selective hydrophilic pores of around 1 nm and causes cytolysis. Pore formation is a multi-step process that involves specific recognition of membrane sphingomyelin (but neither cholesterol nor phosphatidylcholine) using aromatic rich region and adjacent phosphocholine (POC) binding site, firm binding to the membrane (mainly driven by hydrophobic interactions) accompanied by the transfer of the N-terminal region to the lipid-water interface and finally pore formation after oligomerization of monomers. The chain is Magnificalysin I from Heteractis magnifica (Magnificent sea anemone).